Consider the following 147-residue polypeptide: 3-dehydroquinate dehydratase (147 aa).

Tyr23 acts as the Proton acceptor in catalysis. Positions 74, 80, and 87 each coordinate substrate. His100 serves as the catalytic Proton donor. Substrate is bound by residues Ile101–Ser102 and Arg111.

Belongs to the type-II 3-dehydroquinase family. As to quaternary structure, homododecamer.

The catalysed reaction is 3-dehydroquinate = 3-dehydroshikimate + H2O. The protein operates within metabolic intermediate biosynthesis; chorismate biosynthesis; chorismate from D-erythrose 4-phosphate and phosphoenolpyruvate: step 3/7. In terms of biological role, catalyzes a trans-dehydration via an enolate intermediate. This Prochlorococcus marinus (strain MIT 9301) protein is 3-dehydroquinate dehydratase.